The chain runs to 319 residues: Phosphate transport system permease protein PstC (319 aa).

The next 7 helical transmembrane spans lie at 25–45 (AAAA…FLLL), 84–104 (VLSS…IAVF), 120–140 (MVDL…VFVL), 141–161 (APKL…LFLF), 169–189 (AGGG…LPIV), 233–253 (AAAM…LIIL), and 289–309 (GAYI…NAVA). Residues 80 to 309 (FMVTVLSSIC…FLTFVVNAVA (230 aa)) form the ABC transmembrane type-1 domain.

This sequence belongs to the binding-protein-dependent transport system permease family. CysTW subfamily.

Its subcellular location is the cell membrane. Its function is as follows. Part of a binding-protein-dependent transport system for phosphate; probably responsible for the translocation of the substrate across the membrane. This Mycobacterium leprae (strain TN) protein is Phosphate transport system permease protein PstC (pstC).